The following is a 447-amino-acid chain: Asparagine--tRNA ligase (447 aa).

This sequence belongs to the class-II aminoacyl-tRNA synthetase family. As to quaternary structure, homodimer.

It is found in the cytoplasm. The enzyme catalyses tRNA(Asn) + L-asparagine + ATP = L-asparaginyl-tRNA(Asn) + AMP + diphosphate + H(+). This is Asparagine--tRNA ligase from Herpetosiphon aurantiacus (strain ATCC 23779 / DSM 785 / 114-95).